Here is a 165-residue protein sequence, read N- to C-terminus: RNA pyrophosphohydrolase (165 aa).

The region spanning 6 to 149 (GYRPNVGIII…KQSVYHQALT (144 aa)) is the Nudix hydrolase domain. The short motif at 38-59 (GGVRENETPQQAVFRELKEEVG) is the Nudix box element.

It belongs to the Nudix hydrolase family. RppH subfamily. It depends on a divalent metal cation as a cofactor.

Functionally, accelerates the degradation of transcripts by removing pyrophosphate from the 5'-end of triphosphorylated RNA, leading to a more labile monophosphorylated state that can stimulate subsequent ribonuclease cleavage. The polypeptide is RNA pyrophosphohydrolase (Hydrogenovibrio crunogenus (strain DSM 25203 / XCL-2) (Thiomicrospira crunogena)).